The primary structure comprises 86 residues: MNYLITISLALLLMTGVASGVRDGYIADAGNCGYTCVANDYCNTECTKNGAESGYCQWFGRYGNACWCIKLPDKVPIKVPGKCNGR.

A signal peptide spans 1–20 (MNYLITISLALLLMTGVASG). An LCN-type CS-alpha/beta domain is found at 22 to 84 (RDGYIADAGN…VPIKVPGKCN (63 aa)). 4 disulfide bridges follow: Cys32/Cys83, Cys36/Cys56, Cys42/Cys66, and Cys46/Cys68. Asn84 carries the asparagine amide modification.

Belongs to the long (4 C-C) scorpion toxin superfamily. Sodium channel inhibitor family. Alpha subfamily. As to expression, expressed by the venom gland.

It localises to the secreted. Alpha toxins bind voltage-independently at site-3 of sodium channels (Nav) and inhibit the inactivation of the activated channels, thereby blocking neuronal transmission. This is Toxin Aam2 from Androctonus amoreuxi (African fattail scorpion).